The sequence spans 843 residues: Eisosome protein 1 (843 aa).

Serine 2 is subject to N-acetylserine. Serine 2 carries the post-translational modification Phosphoserine. Residues 13-44 form a disordered region; that stretch reads HNIGKTSGGGSRTSSITSSKKSLKHGSKSLRK. The segment covering 33–44 has biased composition (basic residues); sequence KSLKHGSKSLRK. 2 positions are modified to phosphoserine: serine 88 and serine 130. The disordered stretch occupies residues 120–174; sequence KMGPKVVRNNSITSATSKTSKESQTKRKSKESPGAAASKAYSMTMETTSLSSQTN. Composition is skewed to polar residues over residues 127–137 and 163–174; these read RNNSITSATSK and TMETTSLSSQTN. Residues serine 182, serine 401, serine 584, and serine 710 each carry the phosphoserine modification. Residues 717–843 form a disordered region; the sequence is DLPTQLEKIE…QDAISNQEKK (127 aa). Phosphothreonine is present on threonine 720. Positions 752 to 764 are enriched in low complexity; that stretch reads STAAKEATETSSA. A phosphoserine mark is found at serine 763 and serine 775. The span at 781–797 shows a compositional bias: basic and acidic residues; the sequence is SGKEDANDCKSAEHSKE. The segment covering 798-810 has biased composition (polar residues); sequence ISVSQKAGNNKSL. Serine 816, serine 828, serine 829, and serine 838 each carry phosphoserine.

This sequence belongs to the EIS1 family.

It localises to the cytoplasmic granule. The protein localises to the cell membrane. Required for normal formation of eisosomes, large cytoplasmic protein assemblies that localize to specialized domains on plasma membrane and mark the site of endocytosis. The protein is Eisosome protein 1 (EIS1) of Saccharomyces cerevisiae (strain Lalvin EC1118 / Prise de mousse) (Baker's yeast).